A 432-amino-acid polypeptide reads, in one-letter code: MRDYVNWLRHASPYINAHRDCTFVVMLPGEGIEHPNFGNIVHDLVLLHSLGVRLVLVHGSRPQIEARLAARGLTPRFHQNLRITDVPTLECVIDAVGSLRLAIEARLSMDMAASPMQGARLRVVGGNFVTARPIGVVDGIDYLHTGEVRRIDRKGIGRQLDERAIVLLSPLGYSPTGEIFNLACEDVATRAAIDLKADKLLLFGAEPGLLDGQGTLIRELRPQQVAAHLERLGADYQGELLDAAAQACRAGVPRSHMVSYAEDGALLTELFTRDGGGTLVTQEQFEKLREATIEDVGGLLELIRPLEEQGILVRRSREVLEREIGQFSIVERDGLIIACAALYPIADSDAGELACLAVNPDYRHGGRGDELLERIEARARALGLKTLFVLTTRTAHWFRERGFQPSGVERLPAARASLYNYQRQSKVFEKAL.

Residues 286 to 425 (EKLREATIED…ASLYNYQRQS (140 aa)) enclose the N-acetyltransferase domain.

Belongs to the acetyltransferase family. ArgA subfamily.

It is found in the cytoplasm. It carries out the reaction L-glutamate + acetyl-CoA = N-acetyl-L-glutamate + CoA + H(+). Its pathway is amino-acid biosynthesis; L-arginine biosynthesis; N(2)-acetyl-L-ornithine from L-glutamate: step 1/4. The chain is Amino-acid acetyltransferase from Azotobacter vinelandii (strain DJ / ATCC BAA-1303).